The following is a 195-amino-acid chain: MRVAEVVRNTSETQIRVKLDLDGTGRQKLATGVPFLDHMLDQIARHGLVDLEVEAHGDTHIDDHHTVEDVGITLGQAVAKAIGDKKGIRRYGHAYVPLDEALSRVVIDFSGRPGLEFHVPFTRARIGTFDVDLSIEFFRGFVNHAGVTLHIDNLRGINAHHQLETVFKAFGRALRAAVELDERAAGQIPSTKGSL.

This sequence belongs to the imidazoleglycerol-phosphate dehydratase family.

It is found in the cytoplasm. It catalyses the reaction D-erythro-1-(imidazol-4-yl)glycerol 3-phosphate = 3-(imidazol-4-yl)-2-oxopropyl phosphate + H2O. It functions in the pathway amino-acid biosynthesis; L-histidine biosynthesis; L-histidine from 5-phospho-alpha-D-ribose 1-diphosphate: step 6/9. This is Imidazoleglycerol-phosphate dehydratase from Burkholderia multivorans (strain ATCC 17616 / 249).